The primary structure comprises 417 residues: Serine hydroxymethyltransferase 2 (417 aa).

Residues leucine 121 and 125 to 127 (GHL) contribute to the (6S)-5,6,7,8-tetrahydrofolate site. N6-(pyridoxal phosphate)lysine is present on lysine 229. Residue 354–356 (SPF) coordinates (6S)-5,6,7,8-tetrahydrofolate.

The protein belongs to the SHMT family. As to quaternary structure, homodimer. Pyridoxal 5'-phosphate serves as cofactor.

It is found in the cytoplasm. It carries out the reaction (6R)-5,10-methylene-5,6,7,8-tetrahydrofolate + glycine + H2O = (6S)-5,6,7,8-tetrahydrofolate + L-serine. It participates in one-carbon metabolism; tetrahydrofolate interconversion. Its pathway is amino-acid biosynthesis; glycine biosynthesis; glycine from L-serine: step 1/1. In terms of biological role, catalyzes the reversible interconversion of serine and glycine with tetrahydrofolate (THF) serving as the one-carbon carrier. This reaction serves as the major source of one-carbon groups required for the biosynthesis of purines, thymidylate, methionine, and other important biomolecules. Also exhibits THF-independent aldolase activity toward beta-hydroxyamino acids, producing glycine and aldehydes, via a retro-aldol mechanism. This Pseudomonas fluorescens (strain Pf0-1) protein is Serine hydroxymethyltransferase 2.